A 100-amino-acid chain; its full sequence is Sec-independent protein translocase protein TatA (100 aa).

Residues 1-21 form a helical membrane-spanning segment; it reads MGALRPWHIAVLVVVLILLFG. Residues 46-58 show a composition bias toward basic and acidic residues; sequence LHDDDRDLAEKAD. The interval 46–100 is disordered; the sequence is LHDDDRDLAEKADAQAGYQPMPPQVQQGQHPQQSPYPAPPQQQPVVDPVQRTRDS. Over residues 69–78 the composition is skewed to low complexity; sequence QVQQGQHPQQ.

It belongs to the TatA/E family. The Tat system comprises two distinct complexes: a TatABC complex, containing multiple copies of TatA, TatB and TatC subunits, and a separate TatA complex, containing only TatA subunits. Substrates initially bind to the TatABC complex, which probably triggers association of the separate TatA complex to form the active translocon.

It is found in the cell membrane. Part of the twin-arginine translocation (Tat) system that transports large folded proteins containing a characteristic twin-arginine motif in their signal peptide across membranes. TatA could form the protein-conducting channel of the Tat system. The chain is Sec-independent protein translocase protein TatA from Salinispora tropica (strain ATCC BAA-916 / DSM 44818 / JCM 13857 / NBRC 105044 / CNB-440).